A 370-amino-acid polypeptide reads, in one-letter code: Transcription factor E2F2 (370 aa).

The interval 1-73 is disordered; it reads MYKRKTASIV…QSQSQPGQQR (73 aa). The segment covering 15–26 has biased composition (low complexity); it reads SAAGTTSSAMMM. Residues 31 to 49 show a composition bias toward polar residues; it reads AETSVRSQSYESTPVSMDT. A compositionally biased stretch (low complexity) spans 59 to 73; the sequence is SPSNSQSQSQPGQQR. Residues 72–137 mediate DNA binding; it reads QRSVGSLVLL…GRHCSLVRWR (66 aa). Positions 137-226 are dimerization; sequence RGGGFNNAKD…VDIKRNHYEL (90 aa).

The protein belongs to the E2F/DP family. In terms of assembly, forms a heterodimer with Dp. Interacts with Rbf/Rbf1 and Rbf2. Component of the DREAM complex, which is at least composed of Myb, Caf1-55, mip40, mip120, mip130, E2f2, Dp, Rbf, Rbf2, lin-52, HDAC1/Rpd3 and l(3)mbt. Ubiquitously expressed in eye disk.

It is found in the nucleus. Functionally, transcriptional repressor that binds to E2f sites and represses E2f-regulated target genes. Binding to E2f sites requires transcription factor Dp. Acts synergistically with Rbf2 to antagonize E2f1-mediated transcriptional activation. Component of the DREAM complex, a multiprotein complex that can both act as a transcription activator or repressor depending on the context. The DREAM complex is required for recruiting E2f2 at differentiation-specific promoters and for stabilizing E2f2-Rbf complexes during S phase. During development, the complex represses transcription of developmentally controlled E2f target genes. During oogenesis, plays a role in restricting DNA synthesis to sites of chorion gene amplification in late stage ovarian follicle cells. Plays an inhibitory role in ionizing radiation (IR)-induced p53-independent apoptosis. May be involved in cell cycle exit by temporarily limiting CycE-dependent activation of E2f-regulated transcription. The polypeptide is Transcription factor E2F2 (E2f2) (Drosophila melanogaster (Fruit fly)).